A 516-amino-acid chain; its full sequence is Putative glucosylceramidase 2 (516 aa).

The N-terminal stretch at M1–A23 is a signal peptide. E254 acts as the Proton donor in catalysis. E358 functions as the Nucleophile in the catalytic mechanism.

Belongs to the glycosyl hydrolase 30 family.

It carries out the reaction a beta-D-glucosylceramide + H2O = an N-acyl-sphingoid base + D-glucose. The enzyme catalyses a beta-D-glucosyl-(1&lt;-&gt;1')-N-acylsphing-4-enine + H2O = an N-acylsphing-4-enine + D-glucose. It catalyses the reaction an N-acyl-1-beta-D-glucosyl-15-methylhexadecasphing-4-enine + H2O = an N-acyl-15-methylhexadecasphing-4-enine + D-glucose. It functions in the pathway lipid metabolism; sphingolipid metabolism. Functionally, glucosylceramidase that catalyzes the hydrolysis of glucosylceramides into free ceramides and glucose. C.elegans contain specific sphingoid bases, which are unique or different in structure compared to the sphingoid bases found in other animals. Two examples of these distinctive compounds are: 15-methylhexadecasphinganine and 15-methylhexadecasphing-4-enine. This chain is Putative glucosylceramidase 2 (gba-2), found in Caenorhabditis elegans.